A 194-amino-acid polypeptide reads, in one-letter code: Isopentenyl-diphosphate Delta-isomerase (194 aa).

His27 and His34 together coordinate Mn(2+). The 135-residue stretch at Ala32–Leu166 folds into the Nudix hydrolase domain. Cys69 is an active-site residue. Position 71 (His71) interacts with Mn(2+). Glu89 contributes to the Mg(2+) binding site. 2 residues coordinate Mn(2+): Glu116 and Glu118. Glu118 is a catalytic residue.

It belongs to the IPP isomerase type 1 family. It depends on Mg(2+) as a cofactor. Requires Mn(2+) as cofactor.

It localises to the cytoplasm. The catalysed reaction is isopentenyl diphosphate = dimethylallyl diphosphate. It participates in isoprenoid biosynthesis; dimethylallyl diphosphate biosynthesis; dimethylallyl diphosphate from isopentenyl diphosphate: step 1/1. Functionally, catalyzes the 1,3-allylic rearrangement of the homoallylic substrate isopentenyl (IPP) to its highly electrophilic allylic isomer, dimethylallyl diphosphate (DMAPP). In Clavibacter michiganensis subsp. michiganensis (strain NCPPB 382), this protein is Isopentenyl-diphosphate Delta-isomerase.